Reading from the N-terminus, the 505-residue chain is ATP synthase subunit alpha (505 aa).

An ATP-binding site is contributed by G169 to T176.

This sequence belongs to the ATPase alpha/beta chains family. F-type ATPases have 2 components, CF(1) - the catalytic core - and CF(0) - the membrane proton channel. CF(1) has five subunits: alpha(3), beta(3), gamma(1), delta(1), epsilon(1). CF(0) has three main subunits: a(1), b(2) and c(9-12). The alpha and beta chains form an alternating ring which encloses part of the gamma chain. CF(1) is attached to CF(0) by a central stalk formed by the gamma and epsilon chains, while a peripheral stalk is formed by the delta and b chains.

The protein localises to the cell inner membrane. The catalysed reaction is ATP + H2O + 4 H(+)(in) = ADP + phosphate + 5 H(+)(out). Its function is as follows. Produces ATP from ADP in the presence of a proton gradient across the membrane. The alpha chain is a regulatory subunit. The sequence is that of ATP synthase subunit alpha from Desulfosudis oleivorans (strain DSM 6200 / JCM 39069 / Hxd3) (Desulfococcus oleovorans).